The chain runs to 241 residues: Small ribosomal subunit protein uS2 (241 aa).

It belongs to the universal ribosomal protein uS2 family.

The polypeptide is Small ribosomal subunit protein uS2 (Photorhabdus laumondii subsp. laumondii (strain DSM 15139 / CIP 105565 / TT01) (Photorhabdus luminescens subsp. laumondii)).